The primary structure comprises 242 residues: UPF0173 metal-dependent hydrolase Rxyl_1261 (242 aa).

The protein belongs to the UPF0173 family.

This is UPF0173 metal-dependent hydrolase Rxyl_1261 from Rubrobacter xylanophilus (strain DSM 9941 / JCM 11954 / NBRC 16129 / PRD-1).